We begin with the raw amino-acid sequence, 471 residues long: 5-hydroxytryptamine receptor 2A (471 aa).

Residues 1 to 80 (MDILCEENTS…LQEKNWSALL (80 aa)) lie on the Extracellular side of the membrane. N-linked (GlcNAc...) asparagine glycosylation is found at Asn8, Asn38, Asn44, Asn51, and Asn54. A helical membrane pass occupies residues 81 to 97 (TAVVIILTIAGNILVIM). Over 98 to 111 (AVSLEKKLQNATNY) the chain is Cytoplasmic. The helical transmembrane segment at 112–137 (FLMSLAIADMLLGFLVMPVSMLTILY) threads the bilayer. Topologically, residues 138–146 (GYRWPLPSK) are extracellular. Residues 147–171 (LCAVWIYLDVLFSTASIMHLCAISL) traverse the membrane as a helical segment. The cysteines at positions 148 and 227 are disulfide-linked. Asp155 contributes to the serotonin binding site. Residues 172–174 (DRY) carry the DRY motif; important for ligand-induced conformation changes motif. The Cytoplasmic portion of the chain corresponds to 172-191 (DRYVAIQNPIHHSRFNSRTK). A helical membrane pass occupies residues 192-215 (AFLKIIAVWTISVGISMPIPVFGL). At 216–232 (QDDSKVFKEGSCLLADD) the chain is on the extracellular side. Residues 233-258 (NFVLIGSFVSFFIPLTIMVITYFLTI) traverse the membrane as a helical segment. The Cytoplasmic segment spans residues 259 to 322 (KSLQKEATLC…QSISNEQKAC (64 aa)). A Phosphoserine modification is found at Ser280. A helical membrane pass occupies residues 323-348 (KVLGIVFFLFVVMWCPFFITNIMAVI). Position 343 (Asn343) interacts with serotonin. Cys349 and Cys353 are oxidised to a cystine. Residues 349–356 (CKESCNED) are Extracellular-facing. The chain crosses the membrane as a helical span at residues 357 to 382 (VIGALLNVFVWIGYLSSAVNPLVYTL). The NPxxY motif; important for ligand-induced conformation changes and signaling motif lies at 376–380 (NPLVY). Over 383–471 (FNKTYRSAFS…DGVNEKVSCV (89 aa)) the chain is Cytoplasmic. Basic and acidic residues predominate over residues 451 to 465 (QHSEEASKDNSDGVN). Residues 451–471 (QHSEEASKDNSDGVNEKVSCV) form a disordered region. The short motif at 469–471 (SCV) is the PDZ-binding element.

This sequence belongs to the G-protein coupled receptor 1 family. Interacts (via C-terminus) with MPDZ and PATJ. May interact (via C-terminus) with MPP3, PRDX6, DLG4, DLG1, CASK, APBA1 and MAGI2. Interacts with GRM2 and DRD2; this may affect signaling. In terms of tissue distribution, detected in brain cortex (at protein level). Detected in blood platelets.

The protein localises to the cell membrane. The protein resides in the cell projection. Its subcellular location is the dendrite. It is found in the axon. It localises to the cytoplasmic vesicle. The protein localises to the membrane. The protein resides in the caveola. Its subcellular location is the presynapse. G-protein coupled receptor activity is regulated by lipids: oleamide increases HTR2A-mediated activity. Inhibited by IHCH-7179 small molecule: IHCH-7179 acts both as an agonist activator for HTR1A and as an antagonist inhibitor for HTR2A. Its function is as follows. G-protein coupled receptor for 5-hydroxytryptamine (serotonin). Also functions as a receptor for various drugs and psychoactive substances, including mescaline, psilocybin, 1-(2,5-dimethoxy-4-iodophenyl)-2-aminopropane (DOI) and lysergic acid diethylamide (LSD). Ligand binding causes a conformation change that triggers signaling via guanine nucleotide-binding proteins (G proteins) and modulates the activity of downstream effectors. HTR2A is coupled to G(q)/G(11) G alpha proteins and activates phospholipase C-beta, releasing diacylglycerol (DAG) and inositol 1,4,5-trisphosphate (IP3) second messengers that modulate the activity of phosphatidylinositol 3-kinase and promote the release of Ca(2+) ions from intracellular stores, respectively. Beta-arrestin family members inhibit signaling via G proteins and mediate activation of alternative signaling pathways. Affects neural activity, perception, cognition and mood. Plays a role in the regulation of behavior, including responses to anxiogenic situations and psychoactive substances. Plays a role in intestinal smooth muscle contraction, and may play a role in arterial vasoconstriction. Functionally, (Microbial infection) Acts as a receptor for human JC polyomavirus/JCPyV. The protein is 5-hydroxytryptamine receptor 2A of Homo sapiens (Human).